Consider the following 201-residue polypeptide: Ribonuclease HII (201 aa).

Positions 12–201 (DLVAGVDEVG…VRELLDASVE (190 aa)) constitute an RNase H type-2 domain. A divalent metal cation-binding residues include Asp18, Glu19, and Asp110.

The protein belongs to the RNase HII family. It depends on Mn(2+) as a cofactor. Mg(2+) is required as a cofactor.

The protein localises to the cytoplasm. The catalysed reaction is Endonucleolytic cleavage to 5'-phosphomonoester.. Its function is as follows. Endonuclease that specifically degrades the RNA of RNA-DNA hybrids. The polypeptide is Ribonuclease HII (Pseudomonas paraeruginosa (strain DSM 24068 / PA7) (Pseudomonas aeruginosa (strain PA7))).